The chain runs to 503 residues: Probable zinc metalloprotease UREG_01421 (503 aa).

The N-terminal stretch at 1 to 24 (MHSLSSALAGSTFVLLFLCLLASA) is a signal peptide. N-linked (GlcNAc...) asparagine glycosylation is present at asparagine 105. 3 residues coordinate Zn(2+): histidine 176, aspartate 196, and glutamate 232. N-linked (GlcNAc...) asparagine glycosylation occurs at asparagine 247. Zn(2+) is bound at residue aspartate 259. The Fibronectin type-III domain occupies 416-503 (MPRNVRVSTR…RGVAVLPFPA (88 aa)). Residue asparagine 429 is glycosylated (N-linked (GlcNAc...) asparagine).

The protein belongs to the peptidase M28 family. M28B subfamily. Zn(2+) is required as a cofactor.

Its subcellular location is the secreted. The sequence is that of Probable zinc metalloprotease UREG_01421 from Uncinocarpus reesii (strain UAMH 1704).